A 54-amino-acid chain; its full sequence is Putative ATP synthase subunit epsilon, mitochondrial (54 aa).

This sequence belongs to the eukaryotic ATPase epsilon family. As to quaternary structure, F-type ATPases have 2 components, CF(1) - the catalytic core - and CF(0) - the membrane proton channel. CF(1) has five subunits: alpha(3), beta(3), gamma(1), delta(1), epsilon(1). CF(0) seems to have nine subunits: a, b, c, d, e, f, g, F6 and 8 (or A6L).

Its subcellular location is the mitochondrion. The protein localises to the mitochondrion inner membrane. Functionally, mitochondrial membrane ATP synthase (F(1)F(0) ATP synthase or Complex V) produces ATP from ADP in the presence of a proton gradient across the membrane which is generated by electron transport complexes of the respiratory chain. F-type ATPases consist of two structural domains, F(1) - containing the extramembraneous catalytic core, and F(0) - containing the membrane proton channel, linked together by a central stalk and a peripheral stalk. During catalysis, ATP synthesis in the catalytic domain of F(1) is coupled via a rotary mechanism of the central stalk subunits to proton translocation. Part of the complex F(1) domain and of the central stalk which is part of the complex rotary element. Rotation of the central stalk against the surrounding alpha(3)beta(3) subunits leads to hydrolysis of ATP in three separate catalytic sites on the beta subunits. The sequence is that of Putative ATP synthase subunit epsilon, mitochondrial from Caenorhabditis elegans.